The primary structure comprises 304 residues: MENSHLGSLTTERRNERSKRIHQAETIDMLKIMNDEDKTVAEAVQEVLPDVKTAVDYAVGSLKKGGRIIYIGAGTSGRLGVLDAAECPPTFSISPESVIGIIAGGEKALYNAVEGAEDHEAFGRRDLEAVNLSNNDTVIGIAASGRTPYVLGALKYAKKTGAKAISLTCNENSAISQAADHSIEVVVGPEVIAGSTRMKAATAHKMILNMISTAAMIKMGKVYENLMVDVKVSNDKLKERAIRIIQTVTGMPNETAAQALEMSNNQVKTAIIMLKTNEDAAAAEKLLEKSEGDIEKALSIYEKS.

Residues 1–10 (MENSHLGSLT) are compositionally biased toward polar residues. A disordered region spans residues 1-20 (MENSHLGSLTTERRNERSKR). An SIS domain is found at 58–221 (AVGSLKKGGR…STAAMIKMGK (164 aa)). Glutamate 86 functions as the Proton donor in the catalytic mechanism. Residue glutamate 117 is part of the active site.

It belongs to the GCKR-like family. MurNAc-6-P etherase subfamily. As to quaternary structure, homodimer.

The enzyme catalyses N-acetyl-D-muramate 6-phosphate + H2O = N-acetyl-D-glucosamine 6-phosphate + (R)-lactate. The protein operates within amino-sugar metabolism; N-acetylmuramate degradation. Its function is as follows. Specifically catalyzes the cleavage of the D-lactyl ether substituent of MurNAc 6-phosphate, producing GlcNAc 6-phosphate and D-lactate. The polypeptide is N-acetylmuramic acid 6-phosphate etherase 1 (Bacillus licheniformis (strain ATCC 14580 / DSM 13 / JCM 2505 / CCUG 7422 / NBRC 12200 / NCIMB 9375 / NCTC 10341 / NRRL NRS-1264 / Gibson 46)).